A 592-amino-acid polypeptide reads, in one-letter code: MEMQDLTSPHSRLSGSSESPSGPKLGNSHINSNSMTPNGTEVKTEPMSSSETASTTADGSLNNFSGSAIGSSSFSPRPTHQFSPPQIYPSNRPYPHILPTPSSQTMAAYGQTQFTTGMQQATAYATYPQPGQPYGISSYGALWAGIKTEGGLSQSQSPGQTGFLSYGTSFSTPQPGQAPYSYQMQGSSFTTSSGIYTGNNSLTNSSGFNSSQQDYPSYPSFGQGQYAQYYNSSPYPAHYMTSSNTSPTTPSTNATYQLQEPPSGITSQAVTDPTAEYSTIHSPSTPIKDSDSDRLRRGSDGKSRGRGRRNNNPSPPPDSDLERVFIWDLDETIIVFHSLLTGSYANRYGRDPPTSVSLGLRMEEMIFNLADTHLFFNDLEECDQVHIDDVSSDDNGQDLSTYNFGTDGFPAAATSANLCLATGVRGGVDWMRKLAFRYRRVKEIYNTYKNNVGGLLGPAKREAWLQLRAEIEALTDSWLTLALKALSLIHSRTNCVNILVTTTQLIPALAKVLLYGLGIVFPIENIYSATKIGKESCFERIIQRFGRKVVYVVIGDGVEEEQGAKKHAMPFWRISSHSDLMALHHALELEYL.

Disordered regions lie at residues 1–95 and 240–320; these read MEMQ…RPYP and MTSS…PDSD. The segment covering 8 to 26 has biased composition (low complexity); sequence SPHSRLSGSSESPSGPKLG. The span at 28 to 63 shows a compositional bias: polar residues; the sequence is SHINSNSMTPNGTEVKTEPMSSSETASTTADGSLNN. Low complexity-rich tracts occupy residues 64-75 and 241-253; these read FSGSAIGSSSFS and TSSNTSPTTPSTN. The span at 254–287 shows a compositional bias: polar residues; the sequence is ATYQLQEPPSGITSQAVTDPTAEYSTIHSPSTPI. Residues 288 to 303 are compositionally biased toward basic and acidic residues; sequence KDSDSDRLRRGSDGKS. The Nucleophile role is filled by Asp328. Mg(2+)-binding residues include Asp328, Asp330, and Asp556. Asp330 (proton donor) is an active-site residue.

This sequence belongs to the HAD-like hydrolase superfamily. EYA family. In terms of assembly, probably interacts with SIX2, SIX4 and SIX5. Interacts with H2AX in response to DNA damage. Interacts with SIX3; promotes EYA1 translocation to the nucleus. It depends on Mg(2+) as a cofactor. Post-translationally, sumoylated with SUMO1. In terms of tissue distribution, in the embryo, highly expressed in kidney with lower levels in brain. Weakly expressed in lung. In the adult, highly expressed in heart and skeletal muscle. Weakly expressed in brain and liver. No expression in eye or kidney.

Its subcellular location is the cytoplasm. The protein localises to the nucleus. The catalysed reaction is O-phospho-L-tyrosyl-[protein] + H2O = L-tyrosyl-[protein] + phosphate. The enzyme catalyses O-phospho-L-seryl-[protein] + H2O = L-seryl-[protein] + phosphate. It carries out the reaction O-phospho-L-threonyl-[protein] + H2O = L-threonyl-[protein] + phosphate. Its function is as follows. Functions both as protein phosphatase and as transcriptional coactivator for SIX1, and probably also for SIX2, SIX4 and SIX5. Tyrosine phosphatase that dephosphorylates 'Tyr-142' of histone H2AX (H2AXY142ph) and promotes efficient DNA repair via the recruitment of DNA repair complexes containing MDC1. 'Tyr-142' phosphorylation of histone H2AX plays a central role in DNA repair and acts as a mark that distinguishes between apoptotic and repair responses to genotoxic stress. Its function as histone phosphatase may contribute to its function in transcription regulation during organogenesis. Also has phosphatase activity with proteins phosphorylated on Ser and Thr residues (in vitro). Required for normal embryonic development of the craniofacial and trunk skeleton, kidneys and ears. Together with SIX1, it plays an important role in hypaxial muscle development; in this it is functionally redundant with EYA2. In Homo sapiens (Human), this protein is Protein phosphatase EYA1 (EYA1).